Reading from the N-terminus, the 130-residue chain is Small ribosomal subunit protein uS9 (130 aa).

The protein belongs to the universal ribosomal protein uS9 family.

The protein is Small ribosomal subunit protein uS9 of Anaeromyxobacter dehalogenans (strain 2CP-1 / ATCC BAA-258).